A 193-amino-acid chain; its full sequence is Bcl-2-like protein 2 (193 aa).

The residue at position 2 (A2) is an N-acetylalanine. The BH4 signature appears at 9 to 29 (DTRALVADFVGYKLRQKGYVC). The BH1 signature appears at 85–104 (ELFQGGPNWGRLVAFFVFGA). The BH2 motif lies at 136–151 (DWIHSSGGWAEFTALY). A Phosphoserine modification is found at A177.

The protein belongs to the Bcl-2 family. In terms of assembly, interacts with HIF3A (via C-terminus domain). Interacts with BOP. As to expression, expressed (at protein level) in a wide range of tissues with highest levels in brain, spinal cord, testis, pancreas, heart, spleen and mammary glands. Moderate levels found in thymus, ovary and small intestine. Not detected in salivary gland, muscle or liver. Also expressed in cell lines of myeloid, fibroblast and epithelial origin. Not detected in most lymphoid cell lines.

Its subcellular location is the mitochondrion membrane. Promotes cell survival. Blocks dexamethasone-induced apoptosis. Mediates survival of postmitotic Sertoli cells by suppressing death-promoting activity of BAX. The chain is Bcl-2-like protein 2 (BCL2L2) from Homo sapiens (Human).